The following is a 182-amino-acid chain: Triplatin (182 aa).

The signal sequence occupies residues 1 to 18 (MKMIIAVTFLGIVTIAFA). Disulfide bonds link Cys21-Cys133, Cys55-Cys177, and Cys88-Cys105.

Belongs to the calycin superfamily. Triabin family. Expressed in salivary glands.

The protein localises to the secreted. Functionally, inhibits platelet aggregation and vasoconstriction through binding to distinct eicosanoids involved in inflammation (acts as a scavenger), and has a role in inhibiting host innate immunity by impairing platelet-assisted formation of neutrophil extracellular traps (NETs). Inhibits platelet aggregation by collagen, and low doses of thromboxane A2 mimetic (TXA2 mimetic), and arachidonic acid (AA) without affecting aggregation induced by ADP, convulxin (GP6 agonist), and PMA. Binds to TXA2, TXB2, prostaglandine H2 mimetic (PGH2 mimetic), PGJ2, and PGF2alpha. Binding is not observed to leukotrienes, AA, and biogenic amines (PGE1, 5(S)-HETE, 12(S)-HETE, 20-HETE, norepinephrine, epinephrine, serotonin, LTC4 and ADP). Induces relaxation of aorta rat previously contracted with TXA2 mimetic. Moreover, it also impairs platelet-assisted formation of neutrophil extracellular traps (NETs). NETs are web-like structures of DNA and proteins that play an important role in killing of pathogens. In addition, NETs are implicated in thrombus formation. In vivo, this protein exhibits antithrombotic activity in two distinct mice models that are highly dependent on platelets. It is noteworthy that it inhibits thrombosis without promoting excessive bleeding. This Triatoma infestans (Assassin bug) protein is Triplatin.